The sequence spans 268 residues: Cell division cycle-associated protein 3 (268 aa).

2 disordered regions span residues 1 to 232 and 247 to 268; these read MGSA…SELK and GRAW…LVES. A phosphoserine mark is found at S29 and S31. A Phosphothreonine modification is found at T37. S44, S64, and S68 each carry phosphoserine. Positions 56 to 66 are enriched in basic and acidic residues; the sequence is EGLKHAQDSDP. Phosphothreonine is present on T76. Phosphoserine occurs at positions 87 and 94. The interval 91–120 is F-box-like; that stretch reads KQLSEVFETEDSKSNLPPEPVLPPEAPLSS. The span at 107-116 shows a compositional bias: pro residues; that stretch reads PPEPVLPPEA. The span at 117-126 shows a compositional bias: low complexity; the sequence is PLSSELDLPL. Composition is skewed to polar residues over residues 128 to 149, 158 to 169, and 178 to 194; these read TQLS…SKQV, PTETPVASQSSD, and PRSS…NSSK. At S199 the chain carries Phosphoserine. T202 carries the post-translational modification Phosphothreonine. The segment covering 205–215 has biased composition (polar residues); the sequence is QDDNSPGTLTL. S209 is subject to Phosphoserine. T212 is modified (phosphothreonine). The KEN box signature appears at 258 to 260; the sequence is KEN.

Interacts with SKP1. Part of a SCF (SKP1-cullin-F-box) protein ligase complex. Ubiquitinated and degraded by the APC/C-Cdh1 complex.

The protein resides in the cytoplasm. It localises to the cytosol. It functions in the pathway protein modification; protein ubiquitination. Its function is as follows. F-box-like protein which is required for entry into mitosis. Acts by participating in E3 ligase complexes that mediate the ubiquitination and degradation of WEE1 kinase at G2/M phase. The sequence is that of Cell division cycle-associated protein 3 (CDCA3) from Homo sapiens (Human).